The sequence spans 626 residues: Myelin-associated glycoprotein (626 aa).

Positions 1-19 (MIFLTTLPLFWIMISASRG) are cleaved as a signal peptide. Residues 20 to 325 (GHWGAWMPSS…RTVELSVMYA (306 aa)) are interaction with RTN4R and RTN4RL2. The Extracellular segment spans residues 20–516 (GHWGAWMPSS…HRLMWAKIGP (497 aa)). The Ig-like V-type domain maps to 22-120 (WGAWMPSSIS…LGGKYYFRGD (99 aa)). Cystine bridges form between C37–C165, C42–C100, and C159–C217. 65 to 67 (YPK) is a binding site for a ganglioside GT1b (d18:1(4E)). N-linked (GlcNAc...) asparagine glycosylation is present at N99. A ganglioside GT1b (d18:1(4E))-binding positions include R118 and 124 to 128 (YNQYT). Ig-like C2-type domains follow at residues 139–237 (NTPN…LDVK), 241–325 (VIVE…VMYA), 327–412 (WKPT…VEFA), and 413–508 (PIIL…GAHR). N223 and N246 each carry an N-linked (GlcNAc...) asparagine glycan. A disulfide bridge connects residues C261 and C305. N315 and N332 each carry an N-linked (GlcNAc...) asparagine glycan. C347 and C392 form a disulfide bridge. N-linked (GlcNAc...) asparagine glycosylation occurs at N406. Disulfide bonds link C421/C430 and C432/C488. N-linked (GlcNAc...) asparagine glycosylation is found at N450 and N454. The chain crosses the membrane as a helical span at residues 517 to 536 (VGAVVAFAILIAIVCYITQT). C531 is lipidated: S-palmitoyl cysteine. Residues 537-626 (RRKKNVTESP…LAEYAEIRVK (90 aa)) lie on the Cytoplasmic side of the membrane. Phosphoserine occurs at positions 545, 547, and 549. A required for normal axon myelination in the central nervous system region spans residues 577–626 (LGSERRLLGLRGEPPELDLSYSHSDLGKRPTKDSYTLTEELAEYAEIRVK). The segment at 581–608 (RRLLGLRGEPPELDLSYSHSDLGKRPTK) is disordered.

The protein belongs to the immunoglobulin superfamily. SIGLEC (sialic acid binding Ig-like lectin) family. In terms of assembly, monomer and homodimer. Interacts (via the first three N-terminal Ig-like domains) with RTN4R and RTN4RL2. Interacts with isoform 2 of BSG. N-glycosylated. Post-translationally, phosphorylated on tyrosine residues. In terms of processing, ubiquitinated, leading to proteasomal degradation. As to expression, detected in myelin. Detected in olfactory bulb and throughout the brain (at protein level). Detected in brain.

It localises to the cell membrane. Its subcellular location is the membrane raft. Its function is as follows. Adhesion molecule that mediates interactions between myelinating cells and neurons by binding to neuronal sialic acid-containing gangliosides and to the glycoproteins RTN4R and RTN4RL2. Not required for initial myelination, but seems to play a role in the maintenance of normal axon myelination. Protects motoneurons against apoptosis, also after injury; protection against apoptosis is probably mediated via interaction with neuronal RTN4R and RTN4RL2. Required to prevent degeneration of myelinated axons in adults; this probably depends on binding to gangliosides on the axon cell membrane. Negative regulator of neurite outgrowth; in dorsal root ganglion neurons the inhibition is mediated primarily via binding to neuronal RTN4R or RTN4RL2 and to a lesser degree via binding to neuronal gangliosides. In cerebellar granule cells the inhibition is mediated primarily via binding to neuronal gangliosides. In sensory neurons, inhibition of neurite extension depends only partially on RTN4R, RTN4RL2 and gangliosides. Inhibits axon longitudinal growth. Inhibits axon outgrowth by binding to RTN4R. Preferentially binds to alpha-2,3-linked sialic acid. Binds ganglioside Gt1b. This is Myelin-associated glycoprotein (Mag) from Rattus norvegicus (Rat).